Reading from the N-terminus, the 193-residue chain is dTTP/UTP pyrophosphatase (193 aa).

The active-site Proton acceptor is aspartate 70.

This sequence belongs to the Maf family. YhdE subfamily. Requires a divalent metal cation as cofactor.

Its subcellular location is the cytoplasm. It carries out the reaction dTTP + H2O = dTMP + diphosphate + H(+). The enzyme catalyses UTP + H2O = UMP + diphosphate + H(+). Its function is as follows. Nucleoside triphosphate pyrophosphatase that hydrolyzes dTTP and UTP. May have a dual role in cell division arrest and in preventing the incorporation of modified nucleotides into cellular nucleic acids. This is dTTP/UTP pyrophosphatase from Alcanivorax borkumensis (strain ATCC 700651 / DSM 11573 / NCIMB 13689 / SK2).